The primary structure comprises 1051 residues: Leucine zipper protein 1 (1051 aa).

Alanine 2 bears the N-acetylalanine mark. Positions 11 to 354 (ASNRHLRFKL…KLQVKKQKEL (344 aa)) form a coiled coil. 4 disordered regions span residues 247 to 293 (ISST…KDLN), 374 to 401 (RTKL…HKRE), 432 to 554 (AAKA…SQVT), and 569 to 601 (ASSQ…SKAP). The segment covering 254–293 (KESRRKGSLDYLKQVENETRDKSENEKNRNQEDNKVKDLN) has biased composition (basic and acidic residues). Residues serine 256, serine 261, serine 395, serine 513, serine 571, serine 575, serine 612, and serine 660 each carry the phosphoserine modification. Polar residues predominate over residues 569–578 (ASSQRASSEG). The disordered stretch occupies residues 675–727 (VNTTITPEPEPKLQPNSREKVKSRGGTRTPLFENDKNAAVENDSAKSMRSSSN). Threonine 680 carries the phosphothreonine modification. Serine 691 carries the post-translational modification Phosphoserine. Over residues 707–720 (ENDKNAAVENDSAK) the composition is skewed to basic and acidic residues. Serine 746 is modified (phosphoserine). The span at 789-799 (VTSKVTSSITI) shows a compositional bias: low complexity. The tract at residues 789-837 (VTSKVTSSITIYPSDSSGPRAVPTEAPRERHTSTSNIQVGPPELTSVSN) is disordered. Positions 834–884 (SVSNHISSPLELSIHKHDITLQLTEAERVGDGSPKNRAETVVSRSSILIKP) are required for interaction with FLNA. Serine 906 bears the Phosphoserine mark. Basic and acidic residues predominate over residues 929–938 (RDLKCSEDPP). Residues 929-1000 (RDLKCSEDPP…TQSSLTASEV (72 aa)) form a disordered region. Polar residues-rich tracts occupy residues 946 to 958 (EATN…SSTD) and 989 to 999 (RRTQSSLTASE). Threonine 957 carries the post-translational modification Phosphothreonine. Serine 993 carries the post-translational modification Phosphoserine.

Component of the CERF-1 ISWI chromatin remodeling complex (also called the CECR2-containing remodeling factor (CERF) complex) at least composed of CECR2 and SMARCA1. Component of the CERF-5 ISWI chromatin remodeling complex at least composed of CECR2 and SMARCA5/SNF2H. LUZP1 is detected as part of the CERF-1 and CERF-5 complexes in embryonic stem (ES) cells where it is involved in complex stabilization but is not detected in the complexes in the testis. Interacts (via C-terminus) with LIMA1/EPLIN; both proteins restrict ciliation and may work together to regulate this process. Interacts with myosin light chain MYL9; the interaction results in inhibition of phosphorylation of MYL9 by DAPK3. Interacts with DAPK3; the interaction is likely to occur throughout the cell cycle and reduces the LUZP1-mediated suppression of MYL9 phosphorylation. Interacts with the chromosomal passenger complex (CPC); CPC kinase activity is required for localization of LUZP1 to the centromere. Expressed in cerebral cortex, cerebellum, hippocampus and brain stem.

It is found in the cytoplasm. Its subcellular location is the cytoskeleton. It localises to the microtubule organizing center. The protein resides in the centrosome. The protein localises to the cilium basal body. It is found in the midbody. Its subcellular location is the chromosome. It localises to the centromere. The protein resides in the spindle. The protein localises to the stress fiber. It is found in the nucleus. Its subcellular location is the cell projection. It localises to the dendrite. The protein resides in the perikaryon. The protein localises to the cell junction. It is found in the tight junction. In terms of biological role, F-actin cross-linking protein. Stabilizes actin and acts as a negative regulator of primary cilium formation. Positively regulates the phosphorylation of both myosin II and protein phosphatase 1 regulatory subunit PPP1R12A/MYPT1 and promotes the assembly of myosin II stacks within actin stress fibers. Inhibits the phosphorylation of myosin light chain MYL9 by DAPK3 and suppresses the constriction velocity of the contractile ring during cytokinesis. Binds to microtubules and promotes epithelial cell apical constriction by up-regulating levels of diphosphorylated myosin light chain (MLC) through microtubule-dependent inhibition of MLC dephosphorylation by myosin phosphatase. Involved in regulation of cell migration, nuclear size and centriole number, probably through regulation of the actin cytoskeleton. Component of the CERF-1 and CERF-5 chromatin remodeling complexes in embryonic stem cells where it acts to stabilize the complexes. Plays a role in embryonic brain and cardiovascular development. This is Leucine zipper protein 1 (Luzp1) from Rattus norvegicus (Rat).